The following is a 551-amino-acid chain: Serendipity locus protein alpha (551 aa).

Its subcellular location is the cytoplasm. The protein resides in the cell membrane. Functionally, required for the cellularization of the syncytial blastoderm embryo. Involved in the localization of the actin filaments just prior to and during plasma membrane invagination. Sry-alpha together with nullo and bnk may provide auxiliary functions, by acting both to stabilize a large and dynamic microfilament structure and regulate its functions. This Drosophila pseudoobscura pseudoobscura (Fruit fly) protein is Serendipity locus protein alpha (Sry-alpha).